The sequence spans 307 residues: Fructokinase (307 aa).

Belongs to the carbohydrate kinase PfkB family.

It carries out the reaction D-fructose + ATP = D-fructose 6-phosphate + ADP + H(+). This is Fructokinase (cscK) from Escherichia coli.